We begin with the raw amino-acid sequence, 248 residues long: 2-acetamido-2-deoxy-D-galactose-binding seed lectin 2 (248 aa).

Asn-119 carries N-linked (GlcNAc...) asparagine; partial glycosylation. Mn(2+) contacts are provided by Glu-128 and Asp-130. Residues Asp-130, Tyr-132, Asn-134, and Asp-138 each contribute to the Ca(2+) site. Mn(2+) contacts are provided by Asp-138 and His-144.

This sequence belongs to the leguminous lectin family.

This Cytisus scoparius (Scotch broom) protein is 2-acetamido-2-deoxy-D-galactose-binding seed lectin 2.